We begin with the raw amino-acid sequence, 401 residues long: 1-deoxy-D-xylulose 5-phosphate reductoisomerase (401 aa).

Residues threonine 10, glycine 11, serine 12, isoleucine 13, glycine 36, asparagine 38, and asparagine 124 each coordinate NADPH. Lysine 125 provides a ligand contact to 1-deoxy-D-xylulose 5-phosphate. Glutamate 126 is an NADPH binding site. Mn(2+) is bound at residue aspartate 150. Serine 151, glutamate 152, serine 186, and histidine 209 together coordinate 1-deoxy-D-xylulose 5-phosphate. Glutamate 152 is a binding site for Mn(2+). Glycine 215 lines the NADPH pocket. 1-deoxy-D-xylulose 5-phosphate is bound by residues serine 222, asparagine 227, lysine 228, and glutamate 231. Position 231 (glutamate 231) interacts with Mn(2+).

This sequence belongs to the DXR family. It depends on Mg(2+) as a cofactor. Mn(2+) serves as cofactor.

The enzyme catalyses 2-C-methyl-D-erythritol 4-phosphate + NADP(+) = 1-deoxy-D-xylulose 5-phosphate + NADPH + H(+). Its pathway is isoprenoid biosynthesis; isopentenyl diphosphate biosynthesis via DXP pathway; isopentenyl diphosphate from 1-deoxy-D-xylulose 5-phosphate: step 1/6. Its function is as follows. Catalyzes the NADPH-dependent rearrangement and reduction of 1-deoxy-D-xylulose-5-phosphate (DXP) to 2-C-methyl-D-erythritol 4-phosphate (MEP). In Vibrio parahaemolyticus serotype O3:K6 (strain RIMD 2210633), this protein is 1-deoxy-D-xylulose 5-phosphate reductoisomerase.